We begin with the raw amino-acid sequence, 333 residues long: Holliday junction branch migration complex subunit RuvB (333 aa).

The large ATPase domain (RuvB-L) stretch occupies residues 1 to 182 (MDERLVSGSA…FGVISRLEYY (182 aa)). ATP is bound by residues leucine 21, arginine 22, glycine 63, lysine 66, threonine 67, threonine 68, 129–131 (EDY), arginine 172, tyrosine 182, and arginine 219. Threonine 67 is a binding site for Mg(2+). The segment at 183–253 (QVDQLAQIIE…LAVEALERLQ (71 aa)) is small ATPAse domain (RuvB-S). Positions 256-333 (RLGLDHIDHK…AHLGMEVPKR (78 aa)) are head domain (RuvB-H). DNA-binding residues include arginine 311 and arginine 316.

Belongs to the RuvB family. In terms of assembly, homohexamer. Forms an RuvA(8)-RuvB(12)-Holliday junction (HJ) complex. HJ DNA is sandwiched between 2 RuvA tetramers; dsDNA enters through RuvA and exits via RuvB. An RuvB hexamer assembles on each DNA strand where it exits the tetramer. Each RuvB hexamer is contacted by two RuvA subunits (via domain III) on 2 adjacent RuvB subunits; this complex drives branch migration. In the full resolvosome a probable DNA-RuvA(4)-RuvB(12)-RuvC(2) complex forms which resolves the HJ.

The protein resides in the cytoplasm. It carries out the reaction ATP + H2O = ADP + phosphate + H(+). In terms of biological role, the RuvA-RuvB-RuvC complex processes Holliday junction (HJ) DNA during genetic recombination and DNA repair, while the RuvA-RuvB complex plays an important role in the rescue of blocked DNA replication forks via replication fork reversal (RFR). RuvA specifically binds to HJ cruciform DNA, conferring on it an open structure. The RuvB hexamer acts as an ATP-dependent pump, pulling dsDNA into and through the RuvAB complex. RuvB forms 2 homohexamers on either side of HJ DNA bound by 1 or 2 RuvA tetramers; 4 subunits per hexamer contact DNA at a time. Coordinated motions by a converter formed by DNA-disengaged RuvB subunits stimulates ATP hydrolysis and nucleotide exchange. Immobilization of the converter enables RuvB to convert the ATP-contained energy into a lever motion, pulling 2 nucleotides of DNA out of the RuvA tetramer per ATP hydrolyzed, thus driving DNA branch migration. The RuvB motors rotate together with the DNA substrate, which together with the progressing nucleotide cycle form the mechanistic basis for DNA recombination by continuous HJ branch migration. Branch migration allows RuvC to scan DNA until it finds its consensus sequence, where it cleaves and resolves cruciform DNA. The protein is Holliday junction branch migration complex subunit RuvB of Geobacillus thermodenitrificans (strain NG80-2).